The sequence spans 232 residues: Proteasome subunit alpha (232 aa).

Belongs to the peptidase T1A family. The 20S proteasome core is composed of 14 alpha and 14 beta subunits that assemble into four stacked heptameric rings, resulting in a barrel-shaped structure. The two inner rings, each composed of seven catalytic beta subunits, are sandwiched by two outer rings, each composed of seven alpha subunits. The catalytic chamber with the active sites is on the inside of the barrel. Has a gated structure, the ends of the cylinder being occluded by the N-termini of the alpha-subunits. Is capped by the proteasome-associated ATPase, ARC.

It is found in the cytoplasm. It participates in protein degradation; proteasomal Pup-dependent pathway. With respect to regulation, the formation of the proteasomal ATPase ARC-20S proteasome complex, likely via the docking of the C-termini of ARC into the intersubunit pockets in the alpha-rings, may trigger opening of the gate for substrate entry. Interconversion between the open-gate and close-gate conformations leads to a dynamic regulation of the 20S proteasome proteolysis activity. Its function is as follows. Component of the proteasome core, a large protease complex with broad specificity involved in protein degradation. This chain is Proteasome subunit alpha, found in Acidimicrobium ferrooxidans (strain DSM 10331 / JCM 15462 / NBRC 103882 / ICP).